A 192-amino-acid polypeptide reads, in one-letter code: Ion-translocating oxidoreductase complex subunit B (192 aa).

The tract at residues Met1–Ser26 is hydrophobic. In terms of domain architecture, 4Fe-4S spans Glu32–Val91. [4Fe-4S] cluster is bound by residues Cys49, Cys52, Cys57, Cys74, Cys117, Cys120, Cys123, Cys127, Cys147, Cys150, Cys153, and Cys157. 2 consecutive 4Fe-4S ferredoxin-type domains span residues Met108–Arg137 and Ala138–Val167.

Belongs to the 4Fe4S bacterial-type ferredoxin family. RnfB subfamily. In terms of assembly, the complex is composed of six subunits: RsxA, RsxB, RsxC, RsxD, RsxE and RsxG. [4Fe-4S] cluster is required as a cofactor.

The protein resides in the cell inner membrane. Its function is as follows. Part of a membrane-bound complex that couples electron transfer with translocation of ions across the membrane. Required to maintain the reduced state of SoxR. This is Ion-translocating oxidoreductase complex subunit B from Salmonella agona (strain SL483).